Here is a 265-residue protein sequence, read N- to C-terminus: MTAIPIFIISDSIGETARTVIAAVNAQFPASVTLKIQRFPFITDQKTLTPILQDAHQEQAIIVSTLVNHTLQETVTQFCQAKHLTLIDLLSPLTTAISERSQTASLETPGSLRKLDEHYFHRISAMEFAVRYDDGQDPRGLLEADIVLLGVSRTSKTPLSMYLANQNYRVANLPLIPNVPLPKELFKVPAHKIIGLTMPLSTLLKIRQERLATLGLPQTTNYSNMTTVGDELAYANQIFEQLNATTINVADRSIEETASLIQTLI.

150 to 157 (GVSRTSKT) contributes to the ADP binding site.

The protein belongs to the pyruvate, phosphate/water dikinase regulatory protein family. PDRP subfamily.

The catalysed reaction is N(tele)-phospho-L-histidyl/L-threonyl-[pyruvate, phosphate dikinase] + ADP = N(tele)-phospho-L-histidyl/O-phospho-L-threonyl-[pyruvate, phosphate dikinase] + AMP + H(+). It carries out the reaction N(tele)-phospho-L-histidyl/O-phospho-L-threonyl-[pyruvate, phosphate dikinase] + phosphate + H(+) = N(tele)-phospho-L-histidyl/L-threonyl-[pyruvate, phosphate dikinase] + diphosphate. Functionally, bifunctional serine/threonine kinase and phosphorylase involved in the regulation of the pyruvate, phosphate dikinase (PPDK) by catalyzing its phosphorylation/dephosphorylation. The sequence is that of Putative pyruvate, phosphate dikinase regulatory protein 2 from Latilactobacillus sakei subsp. sakei (strain 23K) (Lactobacillus sakei subsp. sakei).